Reading from the N-terminus, the 132-residue chain is Replication enhancer protein (132 aa).

This sequence belongs to the geminiviridae replication enhancer protein family. As to quaternary structure, homooligomer. Interacts with the replication-associated protein (REP). Interacts with host proliferating cell nuclear antigen (PCNA). Interacts with host retinoblastoma-related protein 1 (RBR1), and may thereby deregulate the host cell cycle. Oligomerization and interaction with PCNA are necessary for optimal replication enhancement.

Its function is as follows. Increases viral DNA accumulation. Enhances infectivity and symptom expression. The chain is Replication enhancer protein from Solanum lycopersicum (Tomato).